A 640-amino-acid chain; its full sequence is (Z)-beta-ocimene synthase TPS13PK, chloroplastic (640 aa).

The N-terminal 95 residues, methionine 1–arginine 95, are a transit peptide targeting the chloroplast. Residues methionine 50–asparagine 69 form a disordered region. Residues glutamine 60–asparagine 69 show a composition bias toward polar residues. Positions 334, 371, 375, 515, and 518 each coordinate (2E)-geranyl diphosphate. Positions 371 and 375 each coordinate Mg(2+). The DDXXD motif signature appears at aspartate 371 to aspartate 375. Mg(2+) contacts are provided by aspartate 518, threonine 522, and glutamate 526.

This sequence belongs to the terpene synthase family. As to quaternary structure, monomer. Mg(2+) serves as cofactor.

It is found in the plastid. Its subcellular location is the chloroplast. It carries out the reaction (2E)-geranyl diphosphate = (Z)-beta-ocimene + diphosphate. It functions in the pathway secondary metabolite biosynthesis; terpenoid biosynthesis. Functionally, involved in monoterpene (C10) olefins biosynthesis, constituants of cannabinoids and terpenoids-rich resins. Catalyzes mainly the conversion of (2E)-geranyl diphosphate to (Z)-beta-ocimene. This Cannabis sativa (Hemp) protein is (Z)-beta-ocimene synthase TPS13PK, chloroplastic.